The primary structure comprises 303 residues: MTGIFAEQTVEVVKSAIETADGALDLYNKYLDQVIPWKTFDETIKELSRFKQEYSQEASVLVGDIKVLLMDSQDKYFEATQTVYEWCGVVTQLLSAYILLFDEYNEKKASAQKDILIRILDDGVKKLNEAQKSLLTSSQSFNNASGKLLALDSQLTNDFSEKSSYFQSQVDRIRKEAYAGAAAGIVAGPFGLIISYSIAAGVIEGKLIPELNNRLKTVQNFFTSLSATVKQANKDIDAAKLKLATEIAAIGEIKTETETTRFYVDYDDLMLSLLKGAAKKMINTCNEYQQRHGKKTLFEVPDV.

Cysteine 87 and cysteine 285 are oxidised to a cystine. A helical membrane pass occupies residues 179–199 (AGAAAGIVAGPFGLIISYSIA).

It belongs to the hemolysin E family. As to quaternary structure, monomer and oligomer. In periplasm, it is present as a monomer, while in outer membrane vesicles, it oligomerizes to form a pore structure that is active. The pore is formed by a dodecamer. In periplasm, it forms a disulfide bond, which prevents the oligomerization. In outer membrane vesicles, the redox status prevents formation of the disulfide bond, leading to oligomerization and pore formation.

The protein resides in the secreted. The protein localises to the periplasm. It localises to the host cell membrane. Its function is as follows. Toxin, which has some hemolytic activity towards mammalian cells. Acts by forming a pore-like structure upon contact with mammalian cells. This chain is Hemolysin E (hlyE), found in Salmonella typhi.